Here is a 286-residue protein sequence, read N- to C-terminus: Cysteine-rich repeat secretory protein 57 (286 aa).

An N-terminal signal peptide occupies residues 1 to 20 (METTKKLSVLLCLFFTMNQA). Residues 21–265 (ISESDSDEHM…PSRSGSFSIR (245 aa)) are Extracellular-facing. Gnk2-homologous domains follow at residues 29–131 (HMAT…DKFF) and 137–247 (TKPN…TSNS). N-linked (GlcNAc...) asparagine glycans are attached at residues N35, N40, N44, N60, N69, N90, N100, N108, N209, and N246. Residues 266–284 (GNNKILVGMILAVSVFAFL) form a helical membrane-spanning segment. Over 285–286 (GL) the chain is Cytoplasmic.

The protein belongs to the cysteine-rich repeat secretory protein family.

It localises to the membrane. The sequence is that of Cysteine-rich repeat secretory protein 57 (CRRSP57) from Arabidopsis thaliana (Mouse-ear cress).